Consider the following 284-residue polypeptide: 2-dehydro-3-deoxyphosphooctonate aldolase (284 aa).

Belongs to the KdsA family.

The protein localises to the cytoplasm. The enzyme catalyses D-arabinose 5-phosphate + phosphoenolpyruvate + H2O = 3-deoxy-alpha-D-manno-2-octulosonate-8-phosphate + phosphate. Its pathway is carbohydrate biosynthesis; 3-deoxy-D-manno-octulosonate biosynthesis; 3-deoxy-D-manno-octulosonate from D-ribulose 5-phosphate: step 2/3. The protein operates within bacterial outer membrane biogenesis; lipopolysaccharide biosynthesis. The protein is 2-dehydro-3-deoxyphosphooctonate aldolase of Glaesserella parasuis serovar 5 (strain SH0165) (Haemophilus parasuis).